We begin with the raw amino-acid sequence, 38 residues long: Photosystem II reaction center protein L (38 aa).

A helical transmembrane segment spans residues 17–37 (SLYWGLLLIFVLAVLFSNYFF).

The protein belongs to the PsbL family. In terms of assembly, PSII is composed of 1 copy each of membrane proteins PsbA, PsbB, PsbC, PsbD, PsbE, PsbF, PsbH, PsbI, PsbJ, PsbK, PsbL, PsbM, PsbT, PsbX, PsbY, PsbZ, Psb30/Ycf12, at least 3 peripheral proteins of the oxygen-evolving complex and a large number of cofactors. It forms dimeric complexes.

The protein resides in the plastid. The protein localises to the chloroplast thylakoid membrane. In terms of biological role, one of the components of the core complex of photosystem II (PSII). PSII is a light-driven water:plastoquinone oxidoreductase that uses light energy to abstract electrons from H(2)O, generating O(2) and a proton gradient subsequently used for ATP formation. It consists of a core antenna complex that captures photons, and an electron transfer chain that converts photonic excitation into a charge separation. This subunit is found at the monomer-monomer interface and is required for correct PSII assembly and/or dimerization. The protein is Photosystem II reaction center protein L of Ananas comosus (Pineapple).